We begin with the raw amino-acid sequence, 886 residues long: MRAEEPCAPGAPSALGAQRTPGPELRLSSQLLPELCTFVVRVLFYLGPVYLAGYLGLSITWLLLGALLWMWWRRNRRGKLGRLAAAFEFLDNEREFISRELRGQHLPAWIHFPDVERVEWANKIISQTWPYLSMIMESKFREKLEPKIREKSIHLRTFTFTKLYFGQKCPRVNGVKAHTNTCNRRRVTVDLQICYIGDCEISVELQKIQAGVNGIQLQGTLRVILEPLLVDKPFVGAVTVFFLQKPHLQINWTGLTNLLDAPGINDVSDSLLEDLIATHLVLPNRVTVPVKKGLDLTNLRFPLPCGVIRVHLLEAEQLAQKDNFLGLRGKSDPYAKVSIGLQHFRSRTIYRNLNPTWNEVFEFMVYEVPGQDLEVDLYDEDTDRDDFLGSLQICLGDVMTNRVVDEWFVLNDTTSGRLHLRLEWLSLLTDQEVLTEDHGGLSTAILVVFLESACNLPRNPFDYLNGEYRAKKLSRFARNKVSKDPSSYVKLSVGKKTHTSKTCPHNKDPVWSQVFSFFVHNVATERLHLKVLDDDQECALGMLEVPLCQILPYADLTLEQRFQLDHSGLDSLISMRLVLRFLQVEERELGSPYTGPEALKKGPLLIKKVATNQGPKAQPQEEGPTDLPCPPDPASDTKDVSRSTTTTTSATTVATEPTSQETGPEPKGKDSAKRFCEPIGEKKSPATIFLTVPGPHSPGPIKSPRPMKCPASPFAWPPKRLAPSMSSLNSLASSCFDLADISLNIEGGDLRRRQLGEIQLTVRYVCLRRCLSVLINGCRNLTPCTSSGADPYVRVYLLPERKWACRKKTSVKRKTLEPLFDETFEFFVPMEEVKKRSLDVAVKNSRPLGSHRRKELGKVLIDLSKEDLIKGFSQWYELTPNGQPRS.

The interval 1-21 (MRAEEPCAPGAPSALGAQRTP) is disordered. Residues 1-29 (MRAEEPCAPGAPSALGAQRTPGPELRLSS) lie on the Cytoplasmic side of the membrane. 2 helical membrane passes run 30–50 (QLLPELCTFVVRVLFYLGPVY) and 51–71 (LAGYLGLSITWLLLGALLWMW). At 72-886 (WRRNRRGKLG…ELTPNGQPRS (815 aa)) the chain is on the cytoplasmic side. One can recognise an SMP-LTD domain in the interval 114–291 (DVERVEWANK…LPNRVTVPVK (178 aa)). 2 consecutive C2 domains span residues 291-408 (KKGL…DEWF) and 426-566 (SLLT…QLDH). 9 residues coordinate Ca(2+): Lys321, Asp322, Asp332, Asp379, Glu380, Asp381, Asp383, Asp385, and Asp386. Residues 613–673 (QGPKAQPQEE…PEPKGKDSAK (61 aa)) are disordered. The segment covering 642–659 (RSTTTTTSATTVATEPTS) has biased composition (low complexity). The segment covering 664–673 (PEPKGKDSAK) has biased composition (basic and acidic residues). A C2 3 domain is found at 754–876 (QLGEIQLTVR…DLIKGFSQWY (123 aa)). A required for phosphatidylinositol 4,5-bisphosphate-dependent location at the cell membrane region spans residues 801–808 (RKWACRKK).

This sequence belongs to the extended synaptotagmin family. In terms of assembly, interacts with ESYT1 and ESYT2. In terms of tissue distribution, widely expressed with high level in cerebellum and skin.

It is found in the cell membrane. The protein localises to the endoplasmic reticulum membrane. Binds glycerophospholipids in a barrel-like domain and may play a role in cellular lipid transport. Tethers the endoplasmic reticulum to the cell membrane and promotes the formation of appositions between the endoplasmic reticulum and the cell membrane. In Homo sapiens (Human), this protein is Extended synaptotagmin-3.